Reading from the N-terminus, the 148-residue chain is Snaclec 3 (148 aa).

The first 23 residues, 1-23 (WGDSSSSASACWSCSSPLSGTEA), serve as a signal peptide directing secretion. 3 disulfide bridges follow: C27–C38, C55–C144, and C121–C136. In terms of domain architecture, C-type lectin spans 34–145 (YDQNCYKAFE…CSGTHSFVCK (112 aa)).

This sequence belongs to the snaclec family. Heterodimer; disulfide-linked. Expressed by the venom gland.

It localises to the secreted. Functionally, interferes with one step of hemostasis (modulation of platelet aggregation, or coagulation cascade, for example). This is Snaclec 3 from Echis carinatus sochureki (Saw-scaled viper).